Reading from the N-terminus, the 298-residue chain is Glutamyl-Q tRNA(Asp) synthetase (298 aa).

Residues 9–13 (RFAPS) and E45 contribute to the L-glutamate site. The short motif at 12-22 (PSPSGELHFGS) is the 'HIGH' region element. C101, C103, Y115, and C119 together coordinate Zn(2+). 2 residues coordinate L-glutamate: Y172 and R190. A 'KMSKS' region motif is present at residues 228 to 232 (KLSKQ). K231 contributes to the ATP binding site.

It belongs to the class-I aminoacyl-tRNA synthetase family. GluQ subfamily. It depends on Zn(2+) as a cofactor.

Catalyzes the tRNA-independent activation of glutamate in presence of ATP and the subsequent transfer of glutamate onto a tRNA(Asp). Glutamate is transferred on the 2-amino-5-(4,5-dihydroxy-2-cyclopenten-1-yl) moiety of the queuosine in the wobble position of the QUC anticodon. The polypeptide is Glutamyl-Q tRNA(Asp) synthetase (Citrobacter koseri (strain ATCC BAA-895 / CDC 4225-83 / SGSC4696)).